The chain runs to 323 residues: Peroxisomal targeting signal 2 receptor (323 aa).

6 WD repeats span residues 65 to 96 (DWND…QLWD), 109 to 141 (EHAQ…KLWD), 153 to 184 (GHES…RIWD), 196 to 227 (AHQA…RGWD), 240 to 271 (GHTY…RFWN), and 284 to 315 (HHTE…KIYD).

It belongs to the WD repeat peroxin-7 family. In terms of assembly, interacts with PEX5; interaction only takes place when PEX7 is associated with cargo proteins. Interacts with VWA8. As to expression, ubiquitous. Highest expression in pancreas, skeletal muscle and heart.

It is found in the cytoplasm. The protein resides in the cytosol. The protein localises to the peroxisome matrix. In terms of biological role, receptor required for the peroxisomal import of proteins containing a C-terminal PTS2-type peroxisomal targeting signal. Specifically binds to cargo proteins containing a PTS2 peroxisomal targeting signal in the cytosol. Cargo protein-binding triggers interaction with PEX5 and formation of a ternary complex composed of PEX5 and PEX7 along with PTS2-containing cargo proteins, which is tranlocated into peroxisomes by passing through the PEX13-PEX14 docking complex. The polypeptide is Peroxisomal targeting signal 2 receptor (Homo sapiens (Human)).